The sequence spans 176 residues: Ribosome maturation factor RimM (176 aa).

Positions Ala99–Leu173 constitute a PRC barrel domain.

The protein belongs to the RimM family. Binds ribosomal protein uS19.

It is found in the cytoplasm. An accessory protein needed during the final step in the assembly of 30S ribosomal subunit, possibly for assembly of the head region. Essential for efficient processing of 16S rRNA. May be needed both before and after RbfA during the maturation of 16S rRNA. It has affinity for free ribosomal 30S subunits but not for 70S ribosomes. The sequence is that of Ribosome maturation factor RimM from Trichlorobacter lovleyi (strain ATCC BAA-1151 / DSM 17278 / SZ) (Geobacter lovleyi).